We begin with the raw amino-acid sequence, 364 residues long: Chorismate synthase (364 aa).

R48 and R54 together coordinate NADP(+). FMN contacts are provided by residues 125–127 (RSS), 238–239 (NA), G278, 293–297 (KPTSS), and R319.

This sequence belongs to the chorismate synthase family. Homotetramer. FMNH2 is required as a cofactor.

It carries out the reaction 5-O-(1-carboxyvinyl)-3-phosphoshikimate = chorismate + phosphate. It participates in metabolic intermediate biosynthesis; chorismate biosynthesis; chorismate from D-erythrose 4-phosphate and phosphoenolpyruvate: step 7/7. Its function is as follows. Catalyzes the anti-1,4-elimination of the C-3 phosphate and the C-6 proR hydrogen from 5-enolpyruvylshikimate-3-phosphate (EPSP) to yield chorismate, which is the branch point compound that serves as the starting substrate for the three terminal pathways of aromatic amino acid biosynthesis. This reaction introduces a second double bond into the aromatic ring system. The protein is Chorismate synthase of Shewanella frigidimarina (strain NCIMB 400).